Here is a 361-residue protein sequence, read N- to C-terminus: tRNA N6-adenosine threonylcarbamoyltransferase (361 aa).

Fe cation is bound by residues H110 and H114. Residues 132 to 136, D165, G178, D182, and N284 each bind substrate; that span reads LVSGG. Position 312 (D312) interacts with Fe cation.

Belongs to the KAE1 / TsaD family. Fe(2+) is required as a cofactor.

Its subcellular location is the cytoplasm. The enzyme catalyses L-threonylcarbamoyladenylate + adenosine(37) in tRNA = N(6)-L-threonylcarbamoyladenosine(37) in tRNA + AMP + H(+). Its function is as follows. Required for the formation of a threonylcarbamoyl group on adenosine at position 37 (t(6)A37) in tRNAs that read codons beginning with adenine. Is involved in the transfer of the threonylcarbamoyl moiety of threonylcarbamoyl-AMP (TC-AMP) to the N6 group of A37, together with TsaE and TsaB. TsaD likely plays a direct catalytic role in this reaction. The sequence is that of tRNA N6-adenosine threonylcarbamoyltransferase from Desulfovibrio desulfuricans (strain ATCC 27774 / DSM 6949 / MB).